The sequence spans 311 residues: tRNA-cytidine(32) 2-sulfurtransferase (311 aa).

The short motif at 47–52 is the PP-loop motif element; the sequence is SGGKDS. 3 residues coordinate [4Fe-4S] cluster: C122, C125, and C213.

The protein belongs to the TtcA family. Homodimer. Mg(2+) serves as cofactor. [4Fe-4S] cluster is required as a cofactor.

It is found in the cytoplasm. It carries out the reaction cytidine(32) in tRNA + S-sulfanyl-L-cysteinyl-[cysteine desulfurase] + AH2 + ATP = 2-thiocytidine(32) in tRNA + L-cysteinyl-[cysteine desulfurase] + A + AMP + diphosphate + H(+). The protein operates within tRNA modification. Catalyzes the ATP-dependent 2-thiolation of cytidine in position 32 of tRNA, to form 2-thiocytidine (s(2)C32). The sulfur atoms are provided by the cysteine/cysteine desulfurase (IscS) system. This Salmonella paratyphi B (strain ATCC BAA-1250 / SPB7) protein is tRNA-cytidine(32) 2-sulfurtransferase.